The chain runs to 545 residues: CTP synthase (545 aa).

Positions 1 to 266 (MATNYIFVTG…DDFVCERFRL (266 aa)) are amidoligase domain. A CTP-binding site is contributed by S14. Residue S14 participates in UTP binding. ATP-binding positions include 15-20 (SLGKGI) and D72. Mg(2+)-binding residues include D72 and E140. CTP is bound by residues 147-149 (DIE), 187-192 (KTKPTQ), and K223. Residues 187–192 (KTKPTQ) and K223 each bind UTP. Position 239–241 (239–241 (KDV)) interacts with ATP. The 252-residue stretch at 291 to 542 (TIGMVGKYTE…VKAAYENHKK (252 aa)) folds into the Glutamine amidotransferase type-1 domain. G352 is an L-glutamine binding site. C379 functions as the Nucleophile; for glutamine hydrolysis in the catalytic mechanism. Residues 380–383 (LGMQ), E403, and R470 contribute to the L-glutamine site. Catalysis depends on residues H515 and E517.

The protein belongs to the CTP synthase family. Homotetramer.

The enzyme catalyses UTP + L-glutamine + ATP + H2O = CTP + L-glutamate + ADP + phosphate + 2 H(+). The catalysed reaction is L-glutamine + H2O = L-glutamate + NH4(+). It carries out the reaction UTP + NH4(+) + ATP = CTP + ADP + phosphate + 2 H(+). It functions in the pathway pyrimidine metabolism; CTP biosynthesis via de novo pathway; CTP from UDP: step 2/2. Its activity is regulated as follows. Allosterically activated by GTP, when glutamine is the substrate; GTP has no effect on the reaction when ammonia is the substrate. The allosteric effector GTP functions by stabilizing the protein conformation that binds the tetrahedral intermediate(s) formed during glutamine hydrolysis. Inhibited by the product CTP, via allosteric rather than competitive inhibition. Its function is as follows. Catalyzes the ATP-dependent amination of UTP to CTP with either L-glutamine or ammonia as the source of nitrogen. Regulates intracellular CTP levels through interactions with the four ribonucleotide triphosphates. The sequence is that of CTP synthase from Haemophilus influenzae (strain ATCC 51907 / DSM 11121 / KW20 / Rd).